Reading from the N-terminus, the 79-residue chain is Cell division protein ZapB (79 aa).

Positions 3–79 (LEVFEKLEAK…QALLGRMEEV (77 aa)) form a coiled coil. Positions 36-45 (SLTQEVQSAQ) are enriched in polar residues. A disordered region spans residues 36–63 (SLTQEVQSAQHQREELERENNSLKEQQS). Residues 46-57 (HQREELERENNS) are compositionally biased toward basic and acidic residues.

Belongs to the ZapB family. As to quaternary structure, homodimer. The ends of the coiled-coil dimer bind to each other, forming polymers. Interacts with FtsZ.

It localises to the cytoplasm. Functionally, non-essential, abundant cell division factor that is required for proper Z-ring formation. It is recruited early to the divisome by direct interaction with FtsZ, stimulating Z-ring assembly and thereby promoting cell division earlier in the cell cycle. Its recruitment to the Z-ring requires functional FtsA or ZipA. This is Cell division protein ZapB from Salmonella agona (strain SL483).